The chain runs to 184 residues: ATP synthase subunit b, chloroplastic (184 aa).

A helical transmembrane segment spans residues leucine 27–leucine 49.

The protein belongs to the ATPase B chain family. In terms of assembly, F-type ATPases have 2 components, F(1) - the catalytic core - and F(0) - the membrane proton channel. F(1) has five subunits: alpha(3), beta(3), gamma(1), delta(1), epsilon(1). F(0) has four main subunits: a(1), b(1), b'(1) and c(10-14). The alpha and beta chains form an alternating ring which encloses part of the gamma chain. F(1) is attached to F(0) by a central stalk formed by the gamma and epsilon chains, while a peripheral stalk is formed by the delta, b and b' chains.

Its subcellular location is the plastid. It localises to the chloroplast thylakoid membrane. Its function is as follows. F(1)F(0) ATP synthase produces ATP from ADP in the presence of a proton or sodium gradient. F-type ATPases consist of two structural domains, F(1) containing the extramembraneous catalytic core and F(0) containing the membrane proton channel, linked together by a central stalk and a peripheral stalk. During catalysis, ATP synthesis in the catalytic domain of F(1) is coupled via a rotary mechanism of the central stalk subunits to proton translocation. Functionally, component of the F(0) channel, it forms part of the peripheral stalk, linking F(1) to F(0). The protein is ATP synthase subunit b, chloroplastic of Solanum bulbocastanum (Wild potato).